A 693-amino-acid polypeptide reads, in one-letter code: Polyribonucleotide nucleotidyltransferase (693 aa).

Aspartate 489 and aspartate 495 together coordinate Mg(2+). The 60-residue stretch at 556 to 615 folds into the KH domain; sequence PQIHVMNINPAKIKDVVGRGGATVKGIVEKTGAQIDTSDSGEVKVFAKDKKSMDMAVAMI. The 69-residue stretch at 625–693 folds into the S1 motif domain; the sequence is GQVYKGKIVK…GRVKLSLVAR (69 aa).

Belongs to the polyribonucleotide nucleotidyltransferase family. Component of the RNA degradosome, which is a multiprotein complex involved in RNA processing and mRNA degradation. It depends on Mg(2+) as a cofactor.

It is found in the cytoplasm. The catalysed reaction is RNA(n+1) + phosphate = RNA(n) + a ribonucleoside 5'-diphosphate. Involved in mRNA degradation. Catalyzes the phosphorolysis of single-stranded polyribonucleotides processively in the 3'- to 5'-direction. This chain is Polyribonucleotide nucleotidyltransferase, found in Francisella tularensis subsp. holarctica (strain OSU18).